Consider the following 451-residue polypeptide: Chromosomal replication initiator protein DnaA (451 aa).

Positions 1-72 are domain I, interacts with DnaA modulators; that stretch reads MQSIEDIWQE…ANILQEITGR (72 aa). The segment at 72–108 is domain II; it reads RLFDVRFIDGEQEENFEYTVIKPNPALDEDGVEIGKH. Residues 109–325 form a domain III, AAA+ region region; the sequence is MLNPRYVFDT…GALIRVVAYS (217 aa). 4 residues coordinate ATP: G153, G155, K156, and T157. A domain IV, binds dsDNA region spans residues 326-451; that stretch reads SLVNKDITAG…KNLRKAQNMF (126 aa).

The protein belongs to the DnaA family. As to quaternary structure, oligomerizes as a right-handed, spiral filament on DNA at oriC.

It is found in the cytoplasm. Plays an essential role in the initiation and regulation of chromosomal replication. ATP-DnaA binds to the origin of replication (oriC) to initiate formation of the DNA replication initiation complex once per cell cycle. Binds the DnaA box (a 9 base pair repeat at the origin) and separates the double-stranded (ds)DNA. Forms a right-handed helical filament on oriC DNA; dsDNA binds to the exterior of the filament while single-stranded (ss)DNA is stabiized in the filament's interior. The ATP-DnaA-oriC complex binds and stabilizes one strand of the AT-rich DNA unwinding element (DUE), permitting loading of DNA polymerase. After initiation quickly degrades to an ADP-DnaA complex that is not apt for DNA replication. Binds acidic phospholipids. The polypeptide is Chromosomal replication initiator protein DnaA (Listeria monocytogenes serotype 4b (strain CLIP80459)).